The primary structure comprises 170 residues: Shikimate kinase (170 aa).

An ATP-binding site is contributed by 15-20 (GAGKTT). Mg(2+) is bound at residue Thr19. Asp37, Arg61, and Gly83 together coordinate substrate. Arg121 is a binding site for ATP. Arg140 is a substrate binding site.

The protein belongs to the shikimate kinase family. Monomer. It depends on Mg(2+) as a cofactor.

The protein localises to the cytoplasm. The catalysed reaction is shikimate + ATP = 3-phosphoshikimate + ADP + H(+). Its pathway is metabolic intermediate biosynthesis; chorismate biosynthesis; chorismate from D-erythrose 4-phosphate and phosphoenolpyruvate: step 5/7. Its function is as follows. Catalyzes the specific phosphorylation of the 3-hydroxyl group of shikimic acid using ATP as a cosubstrate. This is Shikimate kinase from Neisseria meningitidis serogroup C (strain 053442).